A 164-amino-acid polypeptide reads, in one-letter code: Cyclic pyranopterin monophosphate synthase (164 aa).

Substrate-binding positions include 75 to 77 (MAH) and 112 to 113 (ME). D127 is a catalytic residue.

The protein belongs to the MoaC family. Homohexamer; trimer of dimers.

The catalysed reaction is (8S)-3',8-cyclo-7,8-dihydroguanosine 5'-triphosphate = cyclic pyranopterin phosphate + diphosphate. It functions in the pathway cofactor biosynthesis; molybdopterin biosynthesis. Functionally, catalyzes the conversion of (8S)-3',8-cyclo-7,8-dihydroguanosine 5'-triphosphate to cyclic pyranopterin monophosphate (cPMP). This Desulforamulus reducens (strain ATCC BAA-1160 / DSM 100696 / MI-1) (Desulfotomaculum reducens) protein is Cyclic pyranopterin monophosphate synthase.